We begin with the raw amino-acid sequence, 288 residues long: 33 kDa chaperonin (288 aa).

Intrachain disulfides connect Cys237–Cys239 and Cys270–Cys273.

This sequence belongs to the HSP33 family. Post-translationally, under oxidizing conditions two disulfide bonds are formed involving the reactive cysteines. Under reducing conditions zinc is bound to the reactive cysteines and the protein is inactive.

The protein resides in the cytoplasm. Functionally, redox regulated molecular chaperone. Protects both thermally unfolding and oxidatively damaged proteins from irreversible aggregation. Plays an important role in the bacterial defense system toward oxidative stress. In Agathobacter rectalis (strain ATCC 33656 / DSM 3377 / JCM 17463 / KCTC 5835 / VPI 0990) (Eubacterium rectale), this protein is 33 kDa chaperonin.